A 326-amino-acid chain; its full sequence is Phospho-N-acetylmuramoyl-pentapeptide-transferase (326 aa).

9 helical membrane-spanning segments follow: residues 3–23, 51–71, 79–99, 115–135, 138–158, 169–189, 195–215, 221–243, and 306–326; these read ISIS…PAFI, TMGG…FALF, VGMI…DDFL, LALQ…GGDI, VFGY…FWLV, GVDG…GVIA, MDIL…FIFN, VFMG…MALH, and FFFW…LYLM.

This sequence belongs to the glycosyltransferase 4 family. MraY subfamily. Requires Mg(2+) as cofactor.

The protein resides in the cell membrane. It carries out the reaction UDP-N-acetyl-alpha-D-muramoyl-L-alanyl-gamma-D-glutamyl-L-lysyl-D-alanyl-D-alanine + di-trans,octa-cis-undecaprenyl phosphate = Mur2Ac(oyl-L-Ala-gamma-D-Glu-L-Lys-D-Ala-D-Ala)-di-trans,octa-cis-undecaprenyl diphosphate + UMP. Its pathway is cell wall biogenesis; peptidoglycan biosynthesis. In terms of biological role, catalyzes the initial step of the lipid cycle reactions in the biosynthesis of the cell wall peptidoglycan: transfers peptidoglycan precursor phospho-MurNAc-pentapeptide from UDP-MurNAc-pentapeptide onto the lipid carrier undecaprenyl phosphate, yielding undecaprenyl-pyrophosphoryl-MurNAc-pentapeptide, known as lipid I. This is Phospho-N-acetylmuramoyl-pentapeptide-transferase from Streptococcus pneumoniae serotype 2 (strain D39 / NCTC 7466).